The sequence spans 1147 residues: Myosin heavy chain IB (1147 aa).

The 669-residue stretch at 9–677 (RGVDDLVLMP…TLFHLEECLD (669 aa)) folds into the Myosin motor domain. 103–110 (GESGAGKT) is an ATP binding site. Ser315 bears the Phosphoserine mark. Residues 551–573 (CDALMEALSRCSPHYIRCIKPND) are actin-binding. Residues 715–900 (KERQRHSVNR…RANIQIGIAT (186 aa)) enclose the TH1 domain. Disordered regions lie at residues 901-954 (GLPK…YSQP) and 969-1089 (AAVP…APAA). 2 stretches are compositionally biased toward gly residues: residues 916–951 (SGGGGGYGGGRGGGGGGRGAAGGGRGGFGGGGGGGY) and 975–1079 (GRGG…GAGR). The SH3 domain maps to 1090 to 1147 (PAKPQVKALYDYDAQTGDELTFKEGDTIIVHQKDPAGWWEGELNGKRGWVPANYVQDI).

It belongs to the TRAFAC class myosin-kinesin ATPase superfamily. Myosin family. As to quaternary structure, myosin I heavy chain is single-headed. Dimer of a heavy and a light chain. Inability to self-assemble into filaments.

In terms of biological role, myosin is a protein that binds to F-actin and has ATPase activity that is activated by F-actin. The sequence is that of Myosin heavy chain IB (MIB) from Acanthamoeba castellanii (Amoeba).